A 561-amino-acid chain; its full sequence is Carboxylesterase 4A (561 aa).

The signal sequence occupies residues 1-20 (MRWILCWSLTLCLMAQTALG). Cysteine 88 and cysteine 116 are disulfide-bonded. A glycan (N-linked (GlcNAc...) asparagine) is linked at asparagine 214. The active-site Acyl-ester intermediate is the serine 221. Cysteines 273 and 284 form a disulfide. Residue asparagine 276 is glycosylated (N-linked (GlcNAc...) asparagine). The active-site Charge relay system is the glutamate 353. A glycan (N-linked (GlcNAc...) asparagine) is linked at asparagine 388. Residue histidine 467 is the Charge relay system of the active site.

The protein belongs to the type-B carboxylesterase/lipase family.

Its subcellular location is the secreted. Its function is as follows. Probable carboxylesterase. This is Carboxylesterase 4A (CES4A) from Homo sapiens (Human).